The following is a 615-amino-acid chain: Angiotensin-converting enzyme (615 aa).

The first 17 residues, 1-17 (MRLFLLALLATLAVTQA), serve as a signal peptide directing secretion. The 589-residue stretch at 19 to 607 (VKEEIQAKEY…IKNNVHIGWT (589 aa)) folds into the Peptidase M2 domain. N-linked (GlcNAc...) asparagine glycosylation occurs at Asn53. A disulfide bridge links Cys133 with Cys141. 2 N-linked (GlcNAc...) asparagine glycosylation sites follow: Asn196 and Asn311. Cys336 and Cys354 are oxidised to a cystine. His367 lines the Zn(2+) pocket. The Proton acceptor role is filled by Glu368. Zn(2+)-binding residues include His371 and Glu395. His497 serves as the catalytic Proton donor. Cys522 and Cys540 are oxidised to a cystine.

Belongs to the peptidase M2 family. It depends on Zn(2+) as a cofactor. Post-translationally, glycosylated. As to expression, expressed in vesicular structures in spermatocytes and early spermatids (at protein level).

It localises to the secreted. Its subcellular location is the extracellular space. It catalyses the reaction Release of a C-terminal dipeptide, oligopeptide-|-Xaa-Yaa, when Xaa is not Pro, and Yaa is neither Asp nor Glu. Thus, conversion of angiotensin I to angiotensin II, with increase in vasoconstrictor activity, but no action on angiotensin II.. With respect to regulation, inhibited by captopril and, to a lesser extent, by lisinopril, trandolaprilat, fosinoprilat and enalaprilat. Functionally, may be involved in the specific maturation or degradation of a number of bioactive peptides. May play a role in the contractions of the heart, gut and testes, and in spermatid differentiation. The polypeptide is Angiotensin-converting enzyme (Ance) (Drosophila melanogaster (Fruit fly)).